The chain runs to 420 residues: Mannose-1-phosphate guanylyltransferase regulatory subunit alpha (420 aa).

A substrate-binding domain region spans residues 2 to 251; it reads LKAVILIGGP…DGIWSQIKSA (250 aa). Residues glutamate 85 and glutamine 247 each contribute to the GDP-alpha-D-mannose site. The segment at 273-420 is hexapeptide repeat domain; the sequence is LAKHTPGGPW…SRSFTNQIIL (148 aa). Residues 356-384 are C-loop; sequence TPSDPNPNDPRARMDSESLFKDGKLLPAI.

This sequence belongs to the transferase hexapeptide repeat family. As to quaternary structure, component of the GMPPA-GMPPB mannose-1-phosphate guanylyltransferase complex composed of 4 GMPPA subunits and 8 GMPPB subunits; the complex is organized into three layers, a central layer made up of 2 GMPPA dimers sandwiched between two layers each made up of 2 GMPPB dimers. Expressed in fibroblasts (at protein level).

The protein localises to the cytoplasm. Its function is as follows. Regulatory subunit of the GMPPA-GMPPB mannose-1-phosphate guanylyltransferase complex; reduces the catalytic activity of GMPPB when part of the complex. Mediates allosteric feedback inhibition of GMPPB catalytic activity upon binding GDP-alpha-D-mannose. Together with GMPPB regulates GDP-alpha-D-mannose levels. The chain is Mannose-1-phosphate guanylyltransferase regulatory subunit alpha from Homo sapiens (Human).